We begin with the raw amino-acid sequence, 320 residues long: Acyl-coenzyme A thioesterase 8 (320 aa).

Catalysis depends on charge relay system residues D233, S255, and Q305. Positions 318–320 match the Microbody targeting signal motif; sequence SKL.

It belongs to the C/M/P thioester hydrolase family. In terms of assembly, homodimer. Ubiquitous.

It localises to the peroxisome matrix. It catalyses the reaction choloyl-CoA + H2O = cholate + CoA + H(+). The enzyme catalyses chenodeoxycholoyl-CoA + H2O = chenodeoxycholate + CoA + H(+). It carries out the reaction acetyl-CoA + H2O = acetate + CoA + H(+). The catalysed reaction is malonyl-CoA + H2O = malonate + CoA + H(+). It catalyses the reaction acetoacetyl-CoA + H2O = acetoacetate + CoA + H(+). The enzyme catalyses propanoyl-CoA + H2O = propanoate + CoA + H(+). It carries out the reaction butanoyl-CoA + H2O = butanoate + CoA + H(+). The catalysed reaction is succinyl-CoA + H2O = succinate + CoA + H(+). It catalyses the reaction glutaryl-CoA + H2O = glutarate + CoA + H(+). The enzyme catalyses hexanoyl-CoA + H2O = hexanoate + CoA + H(+). It carries out the reaction hexanedioyl-CoA + H2O = hexanedioate + CoA + H(+). The catalysed reaction is octanoyl-CoA + H2O = octanoate + CoA + H(+). It catalyses the reaction octanedioyl-CoA + H2O = octanedioate + CoA + H(+). The enzyme catalyses decanoyl-CoA + H2O = decanoate + CoA + H(+). It carries out the reaction decanedioyl-CoA + H2O = decanedioate + CoA + H(+). The catalysed reaction is dodecanoyl-CoA + H2O = dodecanoate + CoA + H(+). It catalyses the reaction dodecanedioyl-CoA + H2O = dodecanedioate + CoA + H(+). The enzyme catalyses tetradecanoyl-CoA + H2O = tetradecanoate + CoA + H(+). It carries out the reaction (9Z)-tetradecenoyl-CoA + H2O = (9Z)-tetradecenoate + CoA + H(+). The catalysed reaction is hexadecanoyl-CoA + H2O = hexadecanoate + CoA + H(+). It catalyses the reaction (9Z)-hexadecenoyl-CoA + H2O = (9Z)-hexadecenoate + CoA + H(+). The enzyme catalyses octadecanoyl-CoA + H2O = octadecanoate + CoA + H(+). It carries out the reaction (9Z)-octadecenoyl-CoA + H2O = (9Z)-octadecenoate + CoA + H(+). The catalysed reaction is (9Z,12Z)-octadecadienoyl-CoA + H2O = (9Z,12Z)-octadecadienoate + CoA + H(+). It catalyses the reaction eicosanoyl-CoA + H2O = eicosanoate + CoA + H(+). The enzyme catalyses (5Z,8Z,11Z,14Z)-eicosatetraenoyl-CoA + H2O = (5Z,8Z,11Z,14Z)-eicosatetraenoate + CoA + H(+). It carries out the reaction 4,8-dimethylnonanoyl-CoA + H2O = 4,8-dimethylnonanoate + CoA + H(+). The catalysed reaction is 2,6-dimethylheptanoyl-CoA + H2O = 2,6-dimethylheptanoate + CoA + H(+). It catalyses the reaction (3S)-3-hydroxy-3-methylglutaryl-CoA + H2O = 3-hydroxy-3-methylglutarate + CoA + H(+). The enzyme catalyses 3alpha,7alpha,12alpha-trihydroxy-5beta-cholestan-26-oyl-CoA + H2O = 3alpha,7alpha,12alpha-trihydroxy-5beta-cholestan-26-oate + CoA + H(+). It carries out the reaction 2-methyloctadecanoyl-CoA + H2O = 2-methyloctadecanoate + CoA + H(+). The catalysed reaction is prostaglandin F2alpha-CoA + H2O = prostaglandin F2alpha + CoA + H(+). Its pathway is lipid metabolism; fatty acid metabolism. Inhibited by CoASH (IC(50)=10-15 uM). Also inhibited by cysteine-reactive agents. Catalyzes the hydrolysis of acyl-CoAs into free fatty acids and coenzyme A (CoASH), regulating their respective intracellular levels. Displays no strong substrate specificity with respect to the carboxylic acid moiety of Acyl-CoAs. Hydrolyzes medium length (C2 to C20) straight-chain, saturated and unsaturated acyl-CoAS but is inactive towards substrates with longer aliphatic chains. Moreover, it catalyzes the hydrolysis of CoA esters of bile acids, such as choloyl-CoA and chenodeoxycholoyl-CoA and competes with bile acid CoA:amino acid N-acyltransferase (BAAT). Is also able to hydrolyze CoA esters of dicarboxylic acids. It is involved in the metabolic regulation of peroxisome proliferation. This is Acyl-coenzyme A thioesterase 8 (Acot8) from Mus musculus (Mouse).